Reading from the N-terminus, the 334-residue chain is Glycerol-3-phosphate dehydrogenase [NAD(P)+] (334 aa).

Positions 13, 33, and 106 each coordinate NADPH. Sn-glycerol 3-phosphate is bound by residues Lys-106, Gly-137, and Ser-139. Ala-141 contributes to the NADPH binding site. The sn-glycerol 3-phosphate site is built by Lys-192, Asp-245, Ser-255, Arg-256, and Asn-257. The Proton acceptor role is filled by Lys-192. Arg-256 contacts NADPH. 2 residues coordinate NADPH: Val-280 and Glu-282.

Belongs to the NAD-dependent glycerol-3-phosphate dehydrogenase family.

The protein localises to the cytoplasm. The enzyme catalyses sn-glycerol 3-phosphate + NAD(+) = dihydroxyacetone phosphate + NADH + H(+). It carries out the reaction sn-glycerol 3-phosphate + NADP(+) = dihydroxyacetone phosphate + NADPH + H(+). It functions in the pathway membrane lipid metabolism; glycerophospholipid metabolism. In terms of biological role, catalyzes the reduction of the glycolytic intermediate dihydroxyacetone phosphate (DHAP) to sn-glycerol 3-phosphate (G3P), the key precursor for phospholipid synthesis. In Chlamydia caviae (strain ATCC VR-813 / DSM 19441 / 03DC25 / GPIC) (Chlamydophila caviae), this protein is Glycerol-3-phosphate dehydrogenase [NAD(P)+].